The chain runs to 389 residues: Chalcone synthase 4 (389 aa).

The active site involves Cys164.

The protein belongs to the thiolase-like superfamily. Chalcone/stilbene synthases family.

It catalyses the reaction (E)-4-coumaroyl-CoA + 3 malonyl-CoA + 3 H(+) = 2',4,4',6'-tetrahydroxychalcone + 3 CO2 + 4 CoA. It functions in the pathway secondary metabolite biosynthesis; flavonoid biosynthesis. Functionally, the primary product of this enzyme is 4,2',4',6'-tetrahydroxychalcone (also termed naringenin-chalcone or chalcone) which can under specific conditions spontaneously isomerize into naringenin. The polypeptide is Chalcone synthase 4 (CHS4) (Pisum sativum (Garden pea)).